A 335-amino-acid chain; its full sequence is Anthranilate phosphoribosyltransferase (335 aa).

5-phospho-alpha-D-ribose 1-diphosphate contacts are provided by residues Gly79, 82-83, Thr87, 89-92, 107-115, and Ser119; these read GD, NVST, and KHGSRSVSS. Gly79 serves as a coordination point for anthranilate. Mg(2+) is bound at residue Ser91. Anthranilate is bound at residue Arg165. The Mg(2+) site is built by Asp223 and Glu224.

Belongs to the anthranilate phosphoribosyltransferase family. In terms of assembly, homodimer. It depends on Mg(2+) as a cofactor.

The enzyme catalyses N-(5-phospho-beta-D-ribosyl)anthranilate + diphosphate = 5-phospho-alpha-D-ribose 1-diphosphate + anthranilate. It functions in the pathway amino-acid biosynthesis; L-tryptophan biosynthesis; L-tryptophan from chorismate: step 2/5. Functionally, catalyzes the transfer of the phosphoribosyl group of 5-phosphorylribose-1-pyrophosphate (PRPP) to anthranilate to yield N-(5'-phosphoribosyl)-anthranilate (PRA). The chain is Anthranilate phosphoribosyltransferase from Helicobacter pylori (strain HPAG1).